The following is a 396-amino-acid chain: ATP phosphoribosyltransferase regulatory subunit (396 aa).

This sequence belongs to the class-II aminoacyl-tRNA synthetase family. HisZ subfamily. As to quaternary structure, heteromultimer composed of HisG and HisZ subunits.

It localises to the cytoplasm. It participates in amino-acid biosynthesis; L-histidine biosynthesis; L-histidine from 5-phospho-alpha-D-ribose 1-diphosphate: step 1/9. Its function is as follows. Required for the first step of histidine biosynthesis. May allow the feedback regulation of ATP phosphoribosyltransferase activity by histidine. This chain is ATP phosphoribosyltransferase regulatory subunit, found in Cellvibrio japonicus (strain Ueda107) (Pseudomonas fluorescens subsp. cellulosa).